A 319-amino-acid chain; its full sequence is Transaldolase (319 aa).

The active-site Schiff-base intermediate with substrate is the Lys126.

This sequence belongs to the transaldolase family. Type 1 subfamily. In terms of assembly, homodimer.

Its subcellular location is the cytoplasm. It catalyses the reaction D-sedoheptulose 7-phosphate + D-glyceraldehyde 3-phosphate = D-erythrose 4-phosphate + beta-D-fructose 6-phosphate. The protein operates within carbohydrate degradation; pentose phosphate pathway; D-glyceraldehyde 3-phosphate and beta-D-fructose 6-phosphate from D-ribose 5-phosphate and D-xylulose 5-phosphate (non-oxidative stage): step 2/3. Its function is as follows. Transaldolase is important for the balance of metabolites in the pentose-phosphate pathway. The protein is Transaldolase of Bordetella avium (strain 197N).